The chain runs to 349 residues: FK506-binding protein-like (349 aa).

T3 carries the phosphothreonine modification. A disordered region spans residues 36–55; sequence RQQPRDPPTETLELEVSPDP. 3 TPR repeats span residues 210–243, 252–285, and 286–319; these read AREERARGTELFRAGNPEGAARCYGRALRLLLTL, TVLHANLAACQLLLGQPQLAAQSCDRVLEREPGH, and LKALYRRGVAQAALGNLEKATADLKKVLAIDPKN.

Forms a ternary complex with CDKN1A/p21 and HSP90AB1/Hsp90. Ubiquitously expressed with higher levels in testis.

Functionally, may be involved in response to X-ray. Regulates p21 protein stability by binding to Hsp90 and p21. In Homo sapiens (Human), this protein is FK506-binding protein-like (FKBPL).